The sequence spans 444 residues: Lycopaoctaene synthase (444 aa).

R48 and R73 together coordinate NADP(+). The Mg(2+) site is built by D76, E79, and D80. R215, K315, and R317 together coordinate NADP(+). Helical transmembrane passes span 391–411 and 415–435; these read TAMVLAGALLIAALAYFAYVY and GTSLKALPLFGVVIILAIGLF.

It belongs to the phytoene/squalene synthase family. Mg(2+) is required as a cofactor.

Its subcellular location is the membrane. It carries out the reaction 2 (2E,6E)-farnesyl diphosphate + NADH + H(+) = squalene + 2 diphosphate + NAD(+). It catalyses the reaction 2 (2E,6E)-farnesyl diphosphate + NADPH + H(+) = squalene + 2 diphosphate + NADP(+). The catalysed reaction is 2 (2E,6E,10E)-geranylgeranyl diphosphate + NADPH + H(+) = all-trans-lycopaoctaene + 2 diphosphate + NADP(+). Its function is as follows. Converts the C20 geranylgeranyl diphosphate (GGPP) to the C40 lycopaoctaene, the first committed intermediate in the production of lycopadiene. Converts farnesyl diphosphate (FPP) into squalene, a precursor for sterol biosynthesis in eukaryotes. Converts with low efficiency the C20 phytyl diphosphate (PPP) to the C40 lycopadiene in vitro. This reaction may not have biological significance in vivo. The polypeptide is Lycopaoctaene synthase (Botryococcus braunii (Green alga)).